A 481-amino-acid chain; its full sequence is Ammonium transporter 2 member 3 (481 aa).

Residues 1 to 36 are Extracellular-facing; it reads MNFNSSKYISHLPESLLPNDASPEWNNKADNAWQLT. An N-linked (GlcNAc...) asparagine glycan is attached at asparagine 4. Residues 37–57 form a helical membrane-spanning segment; the sequence is AATLVGLQTVPGLVILYGSMV. The Cytoplasmic portion of the chain corresponds to 58–62; it reads KKKWA. The chain crosses the membrane as a helical span at residues 63–83; that stretch reads VNSAFMALYAFAAVLVCWVLW. Residues 84 to 123 are Extracellular-facing; sequence AHHMAFGTKLLPFVGKPNFALSQKFLLSKASTNYYLPMAD. A helical transmembrane segment spans residues 124–144; sequence FVFYQFAFAAITLVLLGGSLL. Residues 145–151 are Cytoplasmic-facing; the sequence is GRMNFYA. Residues 152 to 172 traverse the membrane as a helical segment; the sequence is WMLFVPLWLTLSYTVGAFTIW. Residues 173–184 are Extracellular-facing; the sequence is GNGFLEGKIIDY. Residues 185 to 205 form a helical membrane-spanning segment; it reads AGGFVIHLSSGVAGFTAAYWV. The Cytoplasmic portion of the chain corresponds to 206-220; sequence GPRTSNDRQNFPPNN. A helical transmembrane segment spans residues 221–241; that stretch reads IIHMLGGAGFLWMGWTGFNGG. Residues 242–248 are Extracellular-facing; the sequence is APFQVGE. The helical transmembrane segment at 249 to 269 threads the bilayer; sequence ITSLAIFNTHLCTATSILVWI. Topologically, residues 270-281 are cytoplasmic; sequence SLDMAVYKKGSL. Residues 282–302 form a helical membrane-spanning segment; that stretch reads IGSVQGMMTGLVCITPGAGLV. The Extracellular portion of the chain corresponds to 303-304; sequence DP. A helical transmembrane segment spans residues 305–325; sequence WAAILMGALSGSIPWYTMMVL. The Cytoplasmic portion of the chain corresponds to 326–338; that stretch reads HKKSPFFQSVDDT. A helical transmembrane segment spans residues 339–359; sequence LGVFHTHAVAGILGGILSGVF. Over 360–363 the chain is Extracellular; that stretch reads AKPK. A helical membrane pass occupies residues 364–381; that stretch reads LLRILYGPYGSGLLYSYF. At 382–395 the chain is on the cytoplasmic side; the sequence is DDNIGQGIKQMWYQ. The helical transmembrane segment at 396 to 416 threads the bilayer; the sequence is LLGAVFITIWNVVITSLICIL. Topologically, residues 417–481 are extracellular; it reads LNRFVNLRMQ…HSFPINKIDE (65 aa).

This sequence belongs to the ammonia transporter channel (TC 1.A.11.2) family. In terms of tissue distribution, mostly expressed in mycorrhizal roots. Also observed in the cortex and endodermis of non-mycorrhizal roots.

The protein localises to the cell membrane. Involved in ammonium transport. Required for arbuscular mycorrhizal (AM) symbiosis with AM fungi (e.g. Glomus versiforme and G.intraradices) in low nitrogen conditions. The sequence is that of Ammonium transporter 2 member 3 from Medicago truncatula (Barrel medic).